The following is a 199-amino-acid chain: MRLILATSNRGKVKEIKALCKDFKVIPYSELIEEFEIIEDASTFKGNALIKARAVFKVLSQKDEYKDMVVLADDSGISVDVLGGAPGIYSARYASKGASDKENLYKLIEDVKKSGAKGSPAHYTAAIAIVTKNYEYSVHGWMYGDVIAEVRGDGGFGYDPMFIPLGYDKTLGELDDDTKKNISHRAKALSLAKIILQTL.

Substrate is bound at residue 7 to 12; the sequence is TSNRGK. D74 (proton acceptor) is an active-site residue. D74 lines the Mg(2+) pocket. Substrate is bound by residues S75, 156 to 159, K179, and 184 to 185; these read FGYD and HR.

Belongs to the HAM1 NTPase family. Homodimer. Mg(2+) serves as cofactor.

The catalysed reaction is XTP + H2O = XMP + diphosphate + H(+). The enzyme catalyses dITP + H2O = dIMP + diphosphate + H(+). It carries out the reaction ITP + H2O = IMP + diphosphate + H(+). Pyrophosphatase that catalyzes the hydrolysis of nucleoside triphosphates to their monophosphate derivatives, with a high preference for the non-canonical purine nucleotides XTP (xanthosine triphosphate), dITP (deoxyinosine triphosphate) and ITP. Seems to function as a house-cleaning enzyme that removes non-canonical purine nucleotides from the nucleotide pool, thus preventing their incorporation into DNA/RNA and avoiding chromosomal lesions. In Sulfurimonas denitrificans (strain ATCC 33889 / DSM 1251) (Thiomicrospira denitrificans (strain ATCC 33889 / DSM 1251)), this protein is dITP/XTP pyrophosphatase.